Reading from the N-terminus, the 240-residue chain is Cell division protein FtsQ (240 aa).

The Cytoplasmic portion of the chain corresponds to 1-7 (MTGPGLR). A helical membrane pass occupies residues 8–28 (LLAGMGLAGALVLGLSLWLHF). Topologically, residues 29 to 240 (DPDQHLPIGS…EADNDGGNAR (212 aa)) are periplasmic. A POTRA domain is found at 34–102 (LPIGSIQITG…DTLEVHVTEP (69 aa)).

It belongs to the FtsQ/DivIB family. FtsQ subfamily. Part of a complex composed of FtsB, FtsL and FtsQ.

It is found in the cell inner membrane. Its function is as follows. Essential cell division protein. May link together the upstream cell division proteins, which are predominantly cytoplasmic, with the downstream cell division proteins, which are predominantly periplasmic. May control correct divisome assembly. The polypeptide is Cell division protein FtsQ (Thioalkalivibrio sp. (strain K90mix)).